A 139-amino-acid chain; its full sequence is Protein spalt-accessory (139 aa).

The signal sequence occupies residues 1–16 (MKLLIALLALVTAAIA). The span at 60-75 (GIGQGGVHPGQGGFAG) shows a compositional bias: gly residues. The segment at 60–139 (GIGQGGVHPG…HHEHHGHHRH (80 aa)) is disordered. Over residues 109-121 (NPHEYPEHHGEHH) the composition is skewed to basic and acidic residues. Residues 122–139 (REHHEHHGHHEHHGHHRH) show a composition bias toward basic residues.

It is found in the secreted. Its function is as follows. Likely to be involved in the establishment of the head. In Drosophila simulans (Fruit fly), this protein is Protein spalt-accessory (sala).